The primary structure comprises 392 residues: Speckle-type POZ protein-like (392 aa).

One can recognise an MATH domain in the interval 31 to 161; that stretch reads KFSYMWTINN…DDKLTLYCEV (131 aa). The BTB domain occupies 200-267; it reads TDCSLFVEGK…IYTGGTPHVD (68 aa).

It belongs to the Tdpoz family. As to quaternary structure, homodimer. Heterodimer with SPOP. Component of cullin-RING-based BCR (BTB-CUL3-RBX1) E3 ubiquitin-protein ligase complexes containing homodimeric SPOPL or the heterodimer formed by SPOP and SPOPL.

It localises to the nucleus. Its pathway is protein modification; protein ubiquitination. Functionally, component of a cullin-RING-based BCR (BTB-CUL3-RBX1) E3 ubiquitin-protein ligase complex that mediates the ubiquitination and subsequent proteasomal degradation of target proteins, but with relatively low efficiency. This is Speckle-type POZ protein-like (spopl) from Xenopus laevis (African clawed frog).